Here is a 148-residue protein sequence, read N- to C-terminus: Cytochrome c-type biogenesis protein CcmE (148 aa).

At 1-7 (MKPRHKK) the chain is on the cytoplasmic side. A helical; Signal-anchor for type II membrane protein transmembrane segment spans residues 8-28 (LAIIASSVTALGVASVLVLNA). Over 29-148 (FQSNLVFFFS…ADKARKTVMQ (120 aa)) the chain is Periplasmic. The heme site is built by His-123 and Tyr-127.

This sequence belongs to the CcmE/CycJ family.

The protein localises to the cell inner membrane. Its function is as follows. Heme chaperone required for the biogenesis of c-type cytochromes. Transiently binds heme delivered by CcmC and transfers the heme to apo-cytochromes in a process facilitated by CcmF and CcmH. This is Cytochrome c-type biogenesis protein CcmE from Nitrosospira multiformis (strain ATCC 25196 / NCIMB 11849 / C 71).